A 182-amino-acid chain; its full sequence is Small ribosomal subunit protein uS4c (182 aa).

The S4 RNA-binding domain occupies 82–143; sequence MRLDNILFRL…KQRSKALIQN (62 aa).

It belongs to the universal ribosomal protein uS4 family. In terms of assembly, part of the 30S ribosomal subunit. Contacts protein S5. The interaction surface between S4 and S5 is involved in control of translational fidelity.

It is found in the plastid. The protein resides in the chloroplast. Its function is as follows. One of the primary rRNA binding proteins, it binds directly to 16S rRNA where it nucleates assembly of the body of the 30S subunit. In terms of biological role, with S5 and S12 plays an important role in translational accuracy. This Libertia formosa (Snowy mermaid) protein is Small ribosomal subunit protein uS4c (rps4).